The chain runs to 301 residues: Phosducin-like protein (301 aa).

The residue at position 2 (T2) is an N-acetylthreonine. A disordered region spans residues 17–60 (YSTSEDEDSDHEDKDRGRGAPAISSTPAEAELAGEGISINTGPK). S20, S25, S226, S293, and S296 each carry phosphoserine. The Phosducin domain maps to 36-299 (APAISSTPAE…TCHSEDSDLE (264 aa)). The segment at 158 to 301 (FKQVFEIPSG…HSEDSDLEID (144 aa)) is thioredoxin fold.

It belongs to the phosducin family. As to quaternary structure, forms a complex with the beta and gamma subunits of the GTP-binding protein, transducin. Interacts with the CCT chaperonin complex.

The protein localises to the cell projection. Its subcellular location is the cilium. Functions as a co-chaperone for CCT in the assembly of heterotrimeric G protein complexes, facilitates the assembly of both Gbeta-Ggamma and RGS-Gbeta5 heterodimers. Also acts as a positive regulator of hedgehog signaling and regulates ciliary function. The protein is Phosducin-like protein (Pdcl) of Mus musculus (Mouse).